The sequence spans 620 residues: Chaperone protein HscA homolog (620 aa).

This sequence belongs to the heat shock protein 70 family.

Functionally, chaperone involved in the maturation of iron-sulfur cluster-containing proteins. Has a low intrinsic ATPase activity which is markedly stimulated by HscB. The chain is Chaperone protein HscA homolog from Paracidovorax citrulli (strain AAC00-1) (Acidovorax citrulli).